Reading from the N-terminus, the 125-residue chain is uncharacterized protein (125 aa).

This is an uncharacterized protein from Aquifex aeolicus (strain VF5).